We begin with the raw amino-acid sequence, 70 residues long: Protein SlyX homolog (70 aa).

Belongs to the SlyX family.

This is Protein SlyX homolog from Shewanella loihica (strain ATCC BAA-1088 / PV-4).